A 127-amino-acid polypeptide reads, in one-letter code: C-C motif chemokine 28 (127 aa).

The N-terminal stretch at 1-19 is a signal peptide; that stretch reads MQQRGLAIVALAVCAALHA. 2 disulfide bridges follow: C30/C58 and C31/C73. N78 is a glycosylation site (N-linked (GlcNAc...) asparagine). The span at 92–115 shows a compositional bias: basic residues; the sequence is KNGKGNVCHRKKHHGKRNSNRAHQ. The tract at residues 92 to 127 is disordered; the sequence is KNGKGNVCHRKKHHGKRNSNRAHQGKHETYGHKTPY. Positions 116-127 are enriched in basic and acidic residues; sequence GKHETYGHKTPY.

It belongs to the intercrine beta (chemokine CC) family. Preferentially expressed by epithelial cells of diverse tissues including normal and pathological colon, salivary gland, mammary gland, trachea and rectum. Also found in prostate, spleen, thyroid, psoriasis skin and in lower levels in peripheral blood leukocytes, small intestine, Peyer patches, stomach and normal skin.

It localises to the secreted. Functionally, chemotactic activity for resting CD4, CD8 T-cells and eosinophils. Binds to CCR3 and CCR10 and induces calcium mobilization in a dose-dependent manner. This chain is C-C motif chemokine 28 (CCL28), found in Homo sapiens (Human).